The sequence spans 170 residues: Fimbrial protein (170 aa).

The propeptide occupies methionine 1 to glycine 7. N-methylphenylalanine is present on phenylalanine 8. The helical transmembrane segment at phenylalanine 8–leucine 28 threads the bilayer. An O-linked (Gal...) serine glycan is attached at serine 70. Position 100 is an O-(sn-1-glycerophosphoryl)serine (serine 100). Cysteine 127 and cysteine 163 are disulfide-bonded.

This sequence belongs to the N-Me-Phe pilin family. The pili are polar flexible filaments of about 5.4 nanometers diameter and 2.5 micrometers average length; they consist of only a single polypeptide chain arranged in a helical configuration of five subunits per turn in the assembled pilus. O-linked glycan consists of GlcNAc-Gal disaccharide.

The protein resides in the fimbrium. The protein localises to the membrane. Functionally, major component of the type IV pilus (T4P) that plays a role in cellular adherence, microcolony formation as well as twitching motility. This Neisseria meningitidis serogroup A / serotype 4A (strain DSM 15465 / Z2491) protein is Fimbrial protein (pilE).